A 71-amino-acid chain; its full sequence is Translation initiation factor IF-1 (71 aa).

Residues 1–71 (MANDVIEIEG…TKGRITYRFR (71 aa)) enclose the S1-like domain.

Belongs to the IF-1 family. In terms of assembly, component of the 30S ribosomal translation pre-initiation complex which assembles on the 30S ribosome in the order IF-2 and IF-3, IF-1 and N-formylmethionyl-tRNA(fMet); mRNA recruitment can occur at any time during PIC assembly.

It is found in the cytoplasm. In terms of biological role, one of the essential components for the initiation of protein synthesis. Stabilizes the binding of IF-2 and IF-3 on the 30S subunit to which N-formylmethionyl-tRNA(fMet) subsequently binds. Helps modulate mRNA selection, yielding the 30S pre-initiation complex (PIC). Upon addition of the 50S ribosomal subunit IF-1, IF-2 and IF-3 are released leaving the mature 70S translation initiation complex. This is Translation initiation factor IF-1 from Leuconostoc mesenteroides subsp. mesenteroides (strain ATCC 8293 / DSM 20343 / BCRC 11652 / CCM 1803 / JCM 6124 / NCDO 523 / NBRC 100496 / NCIMB 8023 / NCTC 12954 / NRRL B-1118 / 37Y).